Here is a 350-residue protein sequence, read N- to C-terminus: WUSCHEL-related homeobox 1 (350 aa).

A DNA-binding region (homeobox; WUS-type) is located at residues 72 to 136 (MVSSRWNPTP…NHKARERQKR (65 aa)). Positions 283–308 (TNTETCHRNGDDNKDQEQHEDCSNGE) are disordered.

Belongs to the WUS homeobox family.

Its subcellular location is the nucleus. In terms of biological role, transcription factor which may be involved in developmental processes. The chain is WUSCHEL-related homeobox 1 (WOX1) from Arabidopsis thaliana (Mouse-ear cress).